The primary structure comprises 208 residues: N-(5'-phosphoribosyl)anthranilate isomerase (208 aa).

The protein belongs to the TrpF family.

It carries out the reaction N-(5-phospho-beta-D-ribosyl)anthranilate = 1-(2-carboxyphenylamino)-1-deoxy-D-ribulose 5-phosphate. Its pathway is amino-acid biosynthesis; L-tryptophan biosynthesis; L-tryptophan from chorismate: step 3/5. The sequence is that of N-(5'-phosphoribosyl)anthranilate isomerase from Neisseria meningitidis serogroup C / serotype 2a (strain ATCC 700532 / DSM 15464 / FAM18).